Reading from the N-terminus, the 227-residue chain is Cytidylate kinase (227 aa).

7–15 contacts ATP; sequence GPAGSGKST.

Belongs to the cytidylate kinase family. Type 1 subfamily.

The protein localises to the cytoplasm. The catalysed reaction is CMP + ATP = CDP + ADP. The enzyme catalyses dCMP + ATP = dCDP + ADP. In Salinibacter ruber (strain DSM 13855 / M31), this protein is Cytidylate kinase.